The chain runs to 301 residues: Methionyl-tRNA formyltransferase (301 aa).

A (6S)-5,6,7,8-tetrahydrofolate-binding site is contributed by 109-112 (SLLP).

This sequence belongs to the Fmt family.

It carries out the reaction L-methionyl-tRNA(fMet) + (6R)-10-formyltetrahydrofolate = N-formyl-L-methionyl-tRNA(fMet) + (6S)-5,6,7,8-tetrahydrofolate + H(+). In terms of biological role, attaches a formyl group to the free amino group of methionyl-tRNA(fMet). The formyl group appears to play a dual role in the initiator identity of N-formylmethionyl-tRNA by promoting its recognition by IF2 and preventing the misappropriation of this tRNA by the elongation apparatus. In Novosphingobium aromaticivorans (strain ATCC 700278 / DSM 12444 / CCUG 56034 / CIP 105152 / NBRC 16084 / F199), this protein is Methionyl-tRNA formyltransferase.